The chain runs to 76 residues: ATP synthase subunit 9, mitochondrial (76 aa).

A run of 2 helical transmembrane segments spans residues 14–34 and 52–72; these read IATI…AALI and ILGF…SFLL.

It belongs to the ATPase C chain family. In terms of assembly, F-type ATPases have 2 components, CF(1) - the catalytic core - and CF(0) - the membrane proton channel. CF(1) has five subunits: alpha(3), beta(3), gamma(1), delta(1), epsilon(1). CF(0) has three main subunits: a, b and c.

The protein localises to the mitochondrion membrane. Functionally, mitochondrial membrane ATP synthase (F(1)F(0) ATP synthase or Complex V) produces ATP from ADP in the presence of a proton gradient across the membrane which is generated by electron transport complexes of the respiratory chain. F-type ATPases consist of two structural domains, F(1) - containing the extramembraneous catalytic core and F(0) - containing the membrane proton channel, linked together by a central stalk and a peripheral stalk. During catalysis, ATP synthesis in the catalytic domain of F(1) is coupled via a rotary mechanism of the central stalk subunits to proton translocation. Part of the complex F(0) domain. A homomeric c-ring of probably 10 subunits is part of the complex rotary element. The polypeptide is ATP synthase subunit 9, mitochondrial (ATP9) (Wickerhamomyces canadensis (Yeast)).